A 199-amino-acid polypeptide reads, in one-letter code: Pre T-cell antigen receptor alpha (199 aa).

The first 16 residues, 1-16 (MARTWLLLFLGLRCQA), serve as a signal peptide directing secretion. Residues 17 to 155 (LPSGIAGTPF…RQVLRLSVLR (139 aa)) are Extracellular-facing. A disulfide bridge links C47 with C107. N-linked (GlcNAc...) asparagine glycosylation is found at N67 and N117. The tract at residues 117–139 (NRSTHPLQLSGEEASTDRTCPQE) is disordered. Residues 156–176 (LLLFKLLLLDVFLTCSRLCVL) form a helical membrane-spanning segment. The Cytoplasmic portion of the chain corresponds to 177-199 (AGQHLLPPPSSKQAPASTHQSWT).

As to quaternary structure, heterodimer with TCRB; disulfide linked. This heterodimer assembles with CD3 proteins into a signaling-competent pre-T-cell receptor complex. Interacts with RHBDD1. In terms of tissue distribution, found in CD45+ but not in the CD45- fetal liver cells.

It is found in the membrane. The protein resides in the cell membrane. Functionally, component of the pre-T-cell receptor complex (composed of PTCRA, TCRB and the CD3 complex) that has a crucial role in early T-cell development, particularly alpha-beta T cell differentiation. The chain is Pre T-cell antigen receptor alpha from Rattus norvegicus (Rat).